The following is a 183-amino-acid chain: Alkyl hydroperoxide reductase AhpD (183 aa).

Cysteine 132 serves as the catalytic Proton donor. A disulfide bond links cysteine 132 and cysteine 135. Residue cysteine 135 is the Cysteine sulfenic acid (-SOH) intermediate of the active site.

It belongs to the AhpD family.

The enzyme catalyses N(6)-[(R)-dihydrolipoyl]-L-lysyl-[lipoyl-carrier protein] + a hydroperoxide = N(6)-[(R)-lipoyl]-L-lysyl-[lipoyl-carrier protein] + an alcohol + H2O. Functionally, antioxidant protein with alkyl hydroperoxidase activity. Required for the reduction of the AhpC active site cysteine residues and for the regeneration of the AhpC enzyme activity. The polypeptide is Alkyl hydroperoxide reductase AhpD (Acidobacterium capsulatum (strain ATCC 51196 / DSM 11244 / BCRC 80197 / JCM 7670 / NBRC 15755 / NCIMB 13165 / 161)).